A 547-amino-acid chain; its full sequence is Chaperonin GroEL (547 aa).

Residues 30–33, Lys-51, 87–91, Gly-415, and Asp-496 contribute to the ATP site; these read TLGP and DGTTT. The segment at 527 to 547 is disordered; that stretch reads KKDSPAMPGGGGMGGMGGMDF. Positions 534-547 are enriched in gly residues; sequence PGGGGMGGMGGMDF.

Belongs to the chaperonin (HSP60) family. Forms a cylinder of 14 subunits composed of two heptameric rings stacked back-to-back. Interacts with the co-chaperonin GroES.

The protein localises to the cytoplasm. It carries out the reaction ATP + H2O + a folded polypeptide = ADP + phosphate + an unfolded polypeptide.. Functionally, together with its co-chaperonin GroES, plays an essential role in assisting protein folding. The GroEL-GroES system forms a nano-cage that allows encapsulation of the non-native substrate proteins and provides a physical environment optimized to promote and accelerate protein folding. In Methylocella silvestris (strain DSM 15510 / CIP 108128 / LMG 27833 / NCIMB 13906 / BL2), this protein is Chaperonin GroEL.